A 417-amino-acid polypeptide reads, in one-letter code: Voltage-gated potassium channel Kch (417 aa).

Over 1 to 21 (MSHWATFKQTATNLWVTLRHD) the chain is Cytoplasmic. The chain crosses the membrane as a helical span at residues 22–41 (ILALAVFLNGLLIFKTIYGM). The Periplasmic portion of the chain corresponds to 42–63 (SVNLLDIFHIKAFSELDLSLLA). The chain crosses the membrane as a helical span at residues 64-83 (NAPLFMLGVFLVLNSIGLLF). Residues 84–86 (RAK) are Cytoplasmic-facing. Residues 87 to 104 (LAWAISIILLLIALIYTL) traverse the membrane as a helical segment. Over 105–110 (HFYPWL) the chain is Periplasmic. Residues 111–127 (KFSIGFCIFTLVFLLIL) traverse the membrane as a helical segment. Residues 128–140 (RKDFSHSSAAAGT) lie on the Cytoplasmic side of the membrane. Residues 141–160 (IFAFISFTTLLFYSTYGALY) form a helical membrane-spanning segment. Over 161–199 (LSEGFNPRIESLMTAFYFSIETMSTVGYGDIVPVSESAR) the chain is Periplasmic. The Selectivity filter signature appears at 185–190 (TVGYGD). The chain crosses the membrane as a helical span at residues 200–220 (LFTISVIISGITVFATSMTSI). The Cytoplasmic portion of the chain corresponds to 221 to 417 (FGPLIRGGFN…KADSKESAQK (197 aa)). The RCK N-terminal domain maps to 243-363 (KDHFIVCGHS…IKMVHPDIIL (121 aa)).

Belongs to the potassium channel family. Dimer.

It localises to the cell inner membrane. In terms of biological role, k(+)-specific ion channel. May play a role in the defense against osmotic shock. This chain is Voltage-gated potassium channel Kch (kch), found in Escherichia coli (strain K12).